Reading from the N-terminus, the 369-residue chain is Biglycan (369 aa).

Residues 1 to 16 form the signal peptide; sequence MWPLWPLAALLALSQA. Residues 17-37 constitute a propeptide that is removed on maturation; the sequence is LPFEQKAFWDFTLDDGLPMLN. O-linked (Xyl...) (glycosaminoglycan) serine glycans are attached at residues Ser-42 and Ser-48. 2 disulfides stabilise this stretch: Cys-64-Cys-70 and Cys-68-Cys-77. LRR repeat units follow at residues 83–103, 104–127, 128–151, 152–172, 173–196, 197–221, 222–242, 243–266, 267–290, 291–313, 314–343, and 344–369; these read KAVP…NNDI, SELR…NNKI, SKIH…KNHL, VEIP…DNRI, RKVP…GNPL, ENSG…EAKL, TGIP…HNKI, QAIE…HNQI, RMIE…NNKL, SRVP…TNNI, TKVG…NNPV, and PYWE…NYKK. Residues Ser-181 and Ser-199 are each glycosylated (O-linked (Xyl...) (glycosaminoglycan) serine). Residues Asn-271 and Asn-312 are each glycosylated (N-linked (GlcNAc...) asparagine). The cysteines at positions 322 and 355 are disulfide-linked.

This sequence belongs to the small leucine-rich proteoglycan (SLRP) family. SLRP class I subfamily. In terms of assembly, homodimer. Forms a ternary complex with MFAP2 and ELN. Post-translationally, the two attached glycosaminoglycan chains can be either chondroitin sulfate or dermatan sulfate. Found in several connective tissues, especially in articular cartilages.

Its subcellular location is the secreted. It localises to the extracellular space. The protein localises to the extracellular matrix. May be involved in collagen fiber assembly. The chain is Biglycan (BGN) from Bos taurus (Bovine).